Consider the following 427-residue polypeptide: Glutamate-1-semialdehyde 2,1-aminomutase (427 aa).

Lysine 265 carries the post-translational modification N6-(pyridoxal phosphate)lysine.

Belongs to the class-III pyridoxal-phosphate-dependent aminotransferase family. HemL subfamily. In terms of assembly, homodimer. Pyridoxal 5'-phosphate is required as a cofactor.

Its subcellular location is the cytoplasm. It carries out the reaction (S)-4-amino-5-oxopentanoate = 5-aminolevulinate. The protein operates within porphyrin-containing compound metabolism; protoporphyrin-IX biosynthesis; 5-aminolevulinate from L-glutamyl-tRNA(Glu): step 2/2. The sequence is that of Glutamate-1-semialdehyde 2,1-aminomutase from Burkholderia thailandensis (strain ATCC 700388 / DSM 13276 / CCUG 48851 / CIP 106301 / E264).